The following is a 46-amino-acid chain: L-amino-acid oxidase (46 aa).

A glycan (N-linked (GlcNAc...) asparagine) is linked at N31.

This sequence belongs to the flavin monoamine oxidase family. FIG1 subfamily. The cofactor is FAD.

It localises to the secreted. Its subcellular location is the lysosome. It is found in the cytoplasmic vesicle. The protein resides in the secretory vesicle. The protein localises to the acrosome. It carries out the reaction an L-alpha-amino acid + O2 + H2O = a 2-oxocarboxylate + H2O2 + NH4(+). The enzyme catalyses L-tryptophan + O2 + H2O = indole-3-pyruvate + H2O2 + NH4(+). The catalysed reaction is L-phenylalanine + O2 + H2O = 3-phenylpyruvate + H2O2 + NH4(+). It catalyses the reaction L-tyrosine + O2 + H2O = 3-(4-hydroxyphenyl)pyruvate + H2O2 + NH4(+). It carries out the reaction L-arginine + O2 + H2O = 5-guanidino-2-oxopentanoate + H2O2 + NH4(+). It functions in the pathway amino-acid degradation; L-tryptophan degradation via pyruvate pathway. Secreted L-amino-acid oxidase that acts as a key immunoregulator. Has preference for L-aromatic amino acids: converts phenylalanine (Phe), tyrosine (Tyr) and tryptophan (Trp) to phenylpyruvic acid (PP), hydroxyphenylpyruvic acid (HPP), and indole-3-pyruvic acid (I3P), respectively. Also has weak L-arginine oxidase activity. Acts as a negative regulator of anti-tumor immunity by mediating Trp degradation via an indole pyruvate pathway that activates the transcription factor AHR. IL4I1-mediated Trp catabolism generates I3P, giving rise to indole metabolites (indole-3-acetic acid (IAA) and indole-3-aldehyde (I3A)) and kynurenic acid, which act as ligands for AHR, a ligand-activated transcription factor that plays important roles in immunity and cancer. AHR activation by indoles following IL4I1-mediated Trp degradation enhances tumor progression by promoting cancer cell motility and suppressing adaptive immunity. Also has an immunoregulatory function in some immune cells, probably by mediating Trp degradation and promoting downstream AHR activation: inhibits T-cell activation and proliferation, promotes the differentiation of naive CD4(+) T-cells into FOXP3(+) regulatory T-cells (Treg) and regulates the development and function of B-cells. Also regulates M2 macrophage polarization by inhibiting T-cell activation. Also has antibacterial properties by inhibiting growth of Gram negative and Gram positive bacteria through the production of NH4(+) and H2O2. The chain is L-amino-acid oxidase from Mus spretus (Western Mediterranean mouse).